A 470-amino-acid chain; its full sequence is Methylenetetrahydrofolate--tRNA-(uracil-5-)-methyltransferase TrmFO (470 aa).

10–15 (GAGLAG) contributes to the FAD binding site.

The protein belongs to the MnmG family. TrmFO subfamily. The cofactor is FAD.

It is found in the cytoplasm. The catalysed reaction is uridine(54) in tRNA + (6R)-5,10-methylene-5,6,7,8-tetrahydrofolate + NADH + H(+) = 5-methyluridine(54) in tRNA + (6S)-5,6,7,8-tetrahydrofolate + NAD(+). It catalyses the reaction uridine(54) in tRNA + (6R)-5,10-methylene-5,6,7,8-tetrahydrofolate + NADPH + H(+) = 5-methyluridine(54) in tRNA + (6S)-5,6,7,8-tetrahydrofolate + NADP(+). In terms of biological role, catalyzes the folate-dependent formation of 5-methyl-uridine at position 54 (M-5-U54) in all tRNAs. This is Methylenetetrahydrofolate--tRNA-(uracil-5-)-methyltransferase TrmFO from Prochlorococcus marinus (strain MIT 9312).